Consider the following 171-residue polypeptide: Co-chaperone protein HscB (171 aa).

In terms of domain architecture, J spans 2 to 74; sequence DYFTLFGLPA…LTRAEYLLSL (73 aa).

Belongs to the HscB family. In terms of assembly, interacts with HscA and stimulates its ATPase activity. Interacts with IscU.

Its function is as follows. Co-chaperone involved in the maturation of iron-sulfur cluster-containing proteins. Seems to help targeting proteins to be folded toward HscA. In Salmonella agona (strain SL483), this protein is Co-chaperone protein HscB.